Reading from the N-terminus, the 440-residue chain is COP9 signalosome complex subunit 5 (440 aa).

An MPN domain is found at 71–218; that stretch reads VLISKLSCEK…MGAFRTIESK (148 aa). 3 residues coordinate Zn(2+): histidine 164, histidine 166, and aspartate 177. The JAMM motif motif lies at 164-177; the sequence is HSHPGYDCWLSNID. Residues 319–341 show a composition bias toward polar residues; that stretch reads TQRGDSTETSSFGSMFSGDNTSD. Disordered stretches follow at residues 319–343 and 376–400; these read TQRG…SDVD and SRST…HDEG.

It belongs to the peptidase M67A family. CSN5 subfamily. Component of a COP9 signalosome-like (CSN) complex, composed of at least RRI1/CSN5, CSN9, RRI2/CSN10, PCI8/CSN11, CSN12 and CSI1. Within this complex it probably interacts directly with CSN12. Also interacts with RPN5. Requires a divalent metal cation as cofactor.

It is found in the cytoplasm. Its subcellular location is the nucleus. In terms of biological role, catalytic component of the COP9 signalosome (CSN) complex that acts as an regulator of the ubiquitin (Ubl) conjugation pathway by mediating the deneddylation of the cullin subunit of SCF-type E3 ubiquitin-protein ligase complexes. The CSN complex is involved in the regulation of the mating pheromone response. In Saccharomyces cerevisiae (strain YJM789) (Baker's yeast), this protein is COP9 signalosome complex subunit 5 (RRI1).